The sequence spans 278 residues: Ankyrin repeat and SOCS box protein 13 (278 aa).

6 ANK repeats span residues 18 to 47 (VERT…CVNQ), 51 to 80 (DSIT…QVDA), 84 to 113 (DGST…KVNP), 116 to 145 (YTAS…NLEA), 149 to 178 (HFGT…NVNA), and 181 to 210 (LHET…NIYA). Residues 229–278 (AKCFEYYEKTPLSLSQLCRVSLRKATGVRGLEKVAKLNIPPRLIDYLSYN) form the SOCS box domain.

Belongs to the ankyrin SOCS box (ASB) family.

The protein operates within protein modification; protein ubiquitination. May be a substrate-recognition component of a SCF-like ECS (Elongin-Cullin-SOCS-box protein) E3 ubiquitin-protein ligase complex which mediates the ubiquitination and subsequent proteasomal degradation of target proteins. The polypeptide is Ankyrin repeat and SOCS box protein 13 (Asb13) (Mus musculus (Mouse)).